The following is a 256-amino-acid chain: Gamma carbonic anhydrase-like 2, mitochondrial (256 aa).

Residues 1–33 constitute a mitochondrion transit peptide; the sequence is MATSLARISKRSITSAVSSNLIRRYFAAEAVAV. Residues 103-105 and 118-119 each bind substrate; these read RGD and QE. His-124 provides a ligand contact to Zn(2+). Arg-152, Gln-164, and Tyr-231 together coordinate substrate.

The protein belongs to the gamma-class carbonic anhydrase family. As to quaternary structure, component of the mitochondrial oxidoreductase respiratory chain complex I; element of the extra matrix-exposed domain, which is attached to the membrane arm of this complex. Interacts with GAMMACA2.

The protein resides in the mitochondrion membrane. Involved in complex I assembly in mitochondria and respiration. The sequence is that of Gamma carbonic anhydrase-like 2, mitochondrial (GAMMACAL2) from Arabidopsis thaliana (Mouse-ear cress).